The primary structure comprises 477 residues: Sensor protein kinase PmrB (477 aa).

Transmembrane regions (helical) follow at residues 13-33 (LLVN…ALTY) and 161-181 (LLLF…GGLV). An HAMP domain is found at 186 to 238 (ARGLAPLREVQAEVQQRSARHLQPIAVEAVPLEIRGLIDELNLLLERLRTALE). The Histidine kinase domain occupies 246–459 (DAAHEIRTPL…EVQVFLPKTQ (214 aa)). His249 carries the phosphohistidine; by autocatalysis modification. Residues 455–477 (LPKTQPDATRPPARGPDSGRSHI) are disordered.

It localises to the membrane. The catalysed reaction is ATP + protein L-histidine = ADP + protein N-phospho-L-histidine.. Its function is as follows. Member of the two-component regulatory system PmrA/PmrB that plays a role in the regulation of resistance towards polymyxin B and cationic antimicrobial peptides in response to limiting concentrations of Mg(2+). Also autoregulates its own pmrAB operon under Mg(2+)-limiting conditions. May function as a membrane-associated protein kinase that phosphorylates PmrA in response to environmental signals leading to activation of specific gene promoters. The polypeptide is Sensor protein kinase PmrB (pmrB) (Pseudomonas aeruginosa (strain ATCC 15692 / DSM 22644 / CIP 104116 / JCM 14847 / LMG 12228 / 1C / PRS 101 / PAO1)).